A 228-amino-acid polypeptide reads, in one-letter code: Sugar fermentation stimulation protein homolog (228 aa).

It belongs to the SfsA family.

This chain is Sugar fermentation stimulation protein homolog, found in Desulfitobacterium hafniense (strain DSM 10664 / DCB-2).